The primary structure comprises 467 residues: Glutamate--tRNA ligase (467 aa).

The short motif at 13-23 (PSPTGYLHVGG) is the 'HIGH' region element. Positions 245 to 249 (KLSKR) match the 'KMSKS' region motif. Lys248 contributes to the ATP binding site.

It belongs to the class-I aminoacyl-tRNA synthetase family. Glutamate--tRNA ligase type 1 subfamily. Monomer.

Its subcellular location is the cytoplasm. It carries out the reaction tRNA(Glu) + L-glutamate + ATP = L-glutamyl-tRNA(Glu) + AMP + diphosphate. In terms of biological role, catalyzes the attachment of glutamate to tRNA(Glu) in a two-step reaction: glutamate is first activated by ATP to form Glu-AMP and then transferred to the acceptor end of tRNA(Glu). The sequence is that of Glutamate--tRNA ligase from Herminiimonas arsenicoxydans.